Here is an 86-residue protein sequence, read N- to C-terminus: Small ribosomal subunit protein bS16 (86 aa).

It belongs to the bacterial ribosomal protein bS16 family.

This chain is Small ribosomal subunit protein bS16, found in Xylella fastidiosa (strain M23).